Consider the following 102-residue polypeptide: UPF0235 protein Swol_0959 (102 aa).

The protein belongs to the UPF0235 family.

In Syntrophomonas wolfei subsp. wolfei (strain DSM 2245B / Goettingen), this protein is UPF0235 protein Swol_0959.